The sequence spans 599 residues: Afamin (599 aa).

Residues 1–21 (MKLLKLTGFIFFLFFLTESLT) form the signal peptide. 3 Albumin domains span residues 22-210 (LPTQ…IPVT), 211-403 (QYLK…KFNE), and 404-599 (TTEK…KIGN). The N-linked (GlcNAc...) (complex) asparagine glycan is linked to N33. 11 cysteine pairs are disulfide-bonded: C77–C86, C99–C114, C113–C124, C148–C193, C192–C201, C224–C270, C269–C277, C289–C303, C302–C313, C340–C385, and C384–C393. N-linked (GlcNAc...) (complex) asparagine glycosylation is present at N109. The binding pocket for hydrophobic ligands stretch occupies residues 215 to 319 (AFSSYQKHVC…RGQCIINSNK (105 aa)). An N-linked (GlcNAc...) (complex) asparagine; atypical glycan is attached at N383. N-linked (GlcNAc...) (complex) asparagine glycosylation occurs at N402. 6 disulfide bridges follow: C416–C462, C461–C470, C483–C499, C498–C509, C536–C581, and C580–C589. N488 is a glycosylation site (N-linked (GlcNAc...) asparagine).

The protein belongs to the ALB/AFP/VDB family. In terms of assembly, forms a 1:1 complex with Wnt family members; interacts with WNT1, WNT2B, WNT3, WNT3A, WNT5A, WNT7A, WNT7B, WNT8, WNT9A, WNT9B, WNT10A and WNT10B. In terms of processing, N-glycosylated; more than 90% of the glycans are sialylated. In terms of tissue distribution, high level detected in plasma but also in extravascular fluids such as follicular and cerebrospinal fluids (at protein level).

The protein localises to the secreted. Functions as a carrier for hydrophobic molecules in body fluids. Essential for the solubility and activity of lipidated Wnt family members, including WNT1, WNT2B, WNT3, WNT3A, WNT5A, WNT7A, WNT7B, WNT8, WNT9A, WNT9B, WNT10A and WNT10B. Binds vitamin E. May transport vitamin E in body fluids under conditions where the lipoprotein system is not sufficient. May be involved in the transport of vitamin E across the blood-brain barrier. The protein is Afamin (AFM) of Homo sapiens (Human).